Here is a 1196-residue protein sequence, read N- to C-terminus: Sorbin and SH3 domain-containing protein 2 (1196 aa).

2 disordered regions span residues V25–N57 and P75–G95. Phosphoserine occurs at positions 27, 28, and 40. The segment covering P83 to G92 has biased composition (polar residues). S130 and S143 each carry phosphoserine. M148 is modified (alanine amide). The region spanning V166–G227 is the SoHo domain. The segment covering A235 to R247 has biased composition (polar residues). Disordered regions lie at residues A235–K314 and S329–S407. 2 stretches are compositionally biased toward basic and acidic residues: residues S252 to K262 and R276 to P312. S254 is modified (phosphoserine). Over residues S329–S343 the composition is skewed to polar residues. 4 positions are modified to phosphoserine: S334, S340, S343, and S354. The residue at position 372 (T372) is a Phosphothreonine. Phosphoserine is present on S382. Residues S382–S399 are compositionally biased toward low complexity. Residue T387 is modified to Phosphothreonine. Residues S392, S393, S394, S396, S397, S399, S478, S589, S592, S645, S648, S844, and S938 each carry the phosphoserine modification. A disordered region spans residues Q929–K958. Positions V948–K958 are enriched in basic and acidic residues. SH3 domains follow at residues E959–P1018 and G1034–R1095. 2 positions are modified to phosphoserine: S1113 and S1119. One can recognise an SH3 3 domain in the interval G1137 to L1196.

As to quaternary structure, interacts with ABL1/c-Abl, ABL2/v-Abl/Arg, ACTN, CBL and PALLD. Interacts with ABL, CBL, DNM1, DNM2, FLOT1, AFDN, PTK2B/PYK2, SAPAP, SPTAN1, SYNJ1, SYNJ2, VCL/vinculin and WASF. Interacts with PTPN12 and WASF1 via its SH3 domains; this interaction may mediate the partial PTPN12 and WASF1 translocation to focal adhesion sites. Ubiquitinated by CBL. Expressed in brain; found in synapses in cerebellum.

The protein localises to the cytoplasm. The protein resides in the perinuclear region. It localises to the apical cell membrane. Its subcellular location is the cell junction. It is found in the focal adhesion. The protein localises to the cell projection. The protein resides in the lamellipodium. In terms of biological role, adapter protein that plays a role in the assembling of signaling complexes, being a link between ABL kinases and actin cytoskeleton. Can form complex with ABL1 and CBL, thus promoting ubiquitination and degradation of ABL1. May play a role in the regulation of pancreatic cell adhesion, possibly by acting on WASF1 phosphorylation, enhancing phosphorylation by ABL1, as well as dephosphorylation by PTPN12. Isoform 2 increases water and sodium absorption in the intestine and gall-bladder. This is Sorbin and SH3 domain-containing protein 2 (Sorbs2) from Rattus norvegicus (Rat).